Consider the following 284-residue polypeptide: 2-dehydro-3-deoxyphosphooctonate aldolase (284 aa).

It belongs to the KdsA family.

The protein resides in the cytoplasm. The catalysed reaction is D-arabinose 5-phosphate + phosphoenolpyruvate + H2O = 3-deoxy-alpha-D-manno-2-octulosonate-8-phosphate + phosphate. It functions in the pathway carbohydrate biosynthesis; 3-deoxy-D-manno-octulosonate biosynthesis; 3-deoxy-D-manno-octulosonate from D-ribulose 5-phosphate: step 2/3. The protein operates within bacterial outer membrane biogenesis; lipopolysaccharide biosynthesis. This is 2-dehydro-3-deoxyphosphooctonate aldolase from Citrobacter koseri (strain ATCC BAA-895 / CDC 4225-83 / SGSC4696).